A 225-amino-acid polypeptide reads, in one-letter code: NAD(P)H-quinone oxidoreductase subunit K, chloroplastic (225 aa).

The [4Fe-4S] cluster site is built by cysteine 43, cysteine 44, cysteine 108, and cysteine 139.

This sequence belongs to the complex I 20 kDa subunit family. In terms of assembly, NDH is composed of at least 16 different subunits, 5 of which are encoded in the nucleus. [4Fe-4S] cluster is required as a cofactor.

It localises to the plastid. The protein resides in the chloroplast thylakoid membrane. It carries out the reaction a plastoquinone + NADH + (n+1) H(+)(in) = a plastoquinol + NAD(+) + n H(+)(out). The catalysed reaction is a plastoquinone + NADPH + (n+1) H(+)(in) = a plastoquinol + NADP(+) + n H(+)(out). Functionally, NDH shuttles electrons from NAD(P)H:plastoquinone, via FMN and iron-sulfur (Fe-S) centers, to quinones in the photosynthetic chain and possibly in a chloroplast respiratory chain. The immediate electron acceptor for the enzyme in this species is believed to be plastoquinone. Couples the redox reaction to proton translocation, and thus conserves the redox energy in a proton gradient. In Platanus occidentalis (Sycamore), this protein is NAD(P)H-quinone oxidoreductase subunit K, chloroplastic.